The following is a 506-amino-acid chain: AMP phosphorylase (506 aa).

Residues glycine 168, 194 to 199 (SRAITG), and threonine 203 contribute to the AMP site. Aspartate 256 acts as the Proton donor in catalysis. AMP-binding residues include serine 264 and lysine 288.

The protein belongs to the thymidine/pyrimidine-nucleoside phosphorylase family. Type 2 subfamily.

The catalysed reaction is AMP + phosphate = alpha-D-ribose 1,5-bisphosphate + adenine. It carries out the reaction CMP + phosphate = cytosine + alpha-D-ribose 1,5-bisphosphate. It catalyses the reaction UMP + phosphate = alpha-D-ribose 1,5-bisphosphate + uracil. Catalyzes the conversion of AMP and phosphate to adenine and ribose 1,5-bisphosphate (R15P). Exhibits phosphorylase activity toward CMP and UMP in addition to AMP. Functions in an archaeal AMP degradation pathway, together with R15P isomerase and RubisCO. The sequence is that of AMP phosphorylase from Methanococcoides burtonii (strain DSM 6242 / NBRC 107633 / OCM 468 / ACE-M).